The sequence spans 430 residues: Adenylosuccinate synthetase (430 aa).

GTP is bound by residues 12–18 (GDEGKGK) and 40–42 (GHT). Aspartate 13 functions as the Proton acceptor in the catalytic mechanism. Residues aspartate 13 and glycine 40 each coordinate Mg(2+). IMP contacts are provided by residues 13 to 16 (DEGK), 38 to 41 (NAGH), threonine 128, arginine 142, glutamine 223, threonine 238, and arginine 302. The Proton donor role is filled by histidine 41. Residue 298–304 (TTTGRPR) participates in substrate binding. GTP is bound by residues arginine 304, 330–332 (SID), and 412–414 (SVG).

It belongs to the adenylosuccinate synthetase family. In terms of assembly, homodimer. Mg(2+) serves as cofactor.

It localises to the cytoplasm. It catalyses the reaction IMP + L-aspartate + GTP = N(6)-(1,2-dicarboxyethyl)-AMP + GDP + phosphate + 2 H(+). It participates in purine metabolism; AMP biosynthesis via de novo pathway; AMP from IMP: step 1/2. Its function is as follows. Plays an important role in the de novo pathway of purine nucleotide biosynthesis. Catalyzes the first committed step in the biosynthesis of AMP from IMP. The protein is Adenylosuccinate synthetase of Streptococcus gordonii (strain Challis / ATCC 35105 / BCRC 15272 / CH1 / DL1 / V288).